The sequence spans 75 residues: Protein B7 (75 aa).

In Human herpesvirus 6B (strain Z29) (HHV-6 variant B), this protein is Protein B7 (B7).